A 197-amino-acid chain; its full sequence is uncharacterized protein (197 aa).

The protein belongs to the methyltransferase superfamily.

This is an uncharacterized protein from Mycobacterium bovis (strain ATCC BAA-935 / AF2122/97).